A 121-amino-acid chain; its full sequence is Dihydroneopterin aldolase (121 aa).

Residues Glu25 and Met114 each coordinate substrate.

It belongs to the archaeal dihydroneopterin aldolase family. As to quaternary structure, homotetramer.

The enzyme catalyses 7,8-dihydroneopterin = 6-hydroxymethyl-7,8-dihydropterin + glycolaldehyde. It participates in cofactor biosynthesis; 5,6,7,8-tetrahydromethanopterin biosynthesis. In terms of biological role, catalyzes the conversion of 7,8-dihydroneopterin (H2Neo) to 6-hydroxymethyl-7,8-dihydropterin (6-HMD). This is Dihydroneopterin aldolase from Methanocaldococcus jannaschii (strain ATCC 43067 / DSM 2661 / JAL-1 / JCM 10045 / NBRC 100440) (Methanococcus jannaschii).